The primary structure comprises 100 residues: Urease subunit gamma (100 aa).

The protein belongs to the urease gamma subunit family. Heterotrimer of UreA (gamma), UreB (beta) and UreC (alpha) subunits. Three heterotrimers associate to form the active enzyme.

It is found in the cytoplasm. The enzyme catalyses urea + 2 H2O + H(+) = hydrogencarbonate + 2 NH4(+). It participates in nitrogen metabolism; urea degradation; CO(2) and NH(3) from urea (urease route): step 1/1. This Nitrosococcus oceani (strain ATCC 19707 / BCRC 17464 / JCM 30415 / NCIMB 11848 / C-107) protein is Urease subunit gamma.